We begin with the raw amino-acid sequence, 299 residues long: MLSFQDMILTLQRFWIKHGCALMQPYDMEVGAGTFHESTFLRAIGPEPWRAIFVQASRRPSDGRYGENPNRLQRYYQMQVVIKPSAPDLQALYLQSLYAIGIDPATQDIRFVEDNWESPTLGAWGLGWEVWLNGMEISQFTYFQQVGGIECKPVTGELTYGLERIAMYLQNVNSVYDLIWTTTPDGVLTYGDVHQQNEREQSFYNFEYADIADLCAQFDAAEKMSLLLAQKKFPLPAYEQALKASHLFNLLDARRAISVTERQRYILRVRALSKAAAEAWYETRAALDFPLCRQQGIEK.

The protein belongs to the class-II aminoacyl-tRNA synthetase family. In terms of assembly, tetramer of two alpha and two beta subunits.

The protein localises to the cytoplasm. The catalysed reaction is tRNA(Gly) + glycine + ATP = glycyl-tRNA(Gly) + AMP + diphosphate. In Dichelobacter nodosus (strain VCS1703A), this protein is Glycine--tRNA ligase alpha subunit.